A 438-amino-acid chain; its full sequence is Serine hydroxymethyltransferase (438 aa).

(6S)-5,6,7,8-tetrahydrofolate-binding positions include L119 and 123–125 (GHL). Position 228 is an N6-(pyridoxal phosphate)lysine (K228). 370–372 (SPF) is a binding site for (6S)-5,6,7,8-tetrahydrofolate.

This sequence belongs to the SHMT family. Homodimer. Pyridoxal 5'-phosphate is required as a cofactor.

It is found in the cytoplasm. It catalyses the reaction (6R)-5,10-methylene-5,6,7,8-tetrahydrofolate + glycine + H2O = (6S)-5,6,7,8-tetrahydrofolate + L-serine. It functions in the pathway one-carbon metabolism; tetrahydrofolate interconversion. Its pathway is amino-acid biosynthesis; glycine biosynthesis; glycine from L-serine: step 1/1. Functionally, catalyzes the reversible interconversion of serine and glycine with tetrahydrofolate (THF) serving as the one-carbon carrier. This reaction serves as the major source of one-carbon groups required for the biosynthesis of purines, thymidylate, methionine, and other important biomolecules. Also exhibits THF-independent aldolase activity toward beta-hydroxyamino acids, producing glycine and aldehydes, via a retro-aldol mechanism. This is Serine hydroxymethyltransferase from Chlorobium chlorochromatii (strain CaD3).